A 157-amino-acid polypeptide reads, in one-letter code: Eukaryotic translation initiation factor 5A-1 (157 aa).

N-acetylserine is present on serine 2. Residue serine 2 is modified to Phosphoserine. Phosphothreonine occurs at positions 7 and 10. At lysine 51 the chain carries Hypusine. At serine 74 the chain carries Phosphoserine. Residue lysine 86 forms a Glycyl lysine isopeptide (Lys-Gly) (interchain with G-Cter in ubiquitin) linkage.

It belongs to the eIF-5A family. Homodimer. Binds to 80S ribosomes. Actively translating ribosomes show mutually exclusive binding of eIF5a (HYP2 or ANB1) and EFT1/eEF2. Interacts with DYS1 and LIA1. Lys-51 undergoes hypusination, a unique post-translational modification that consists in the addition of a butylamino group from spermidine to lysine side chain, leading to the formation of the unusual amino acid hypusine. eIF-5As are the only known proteins to undergo this modification, which is essential for their function.

It localises to the cytoplasm. In terms of biological role, translation factor that promotes translation elongation and termination, particularly upon ribosome stalling at specific amino acid sequence contexts. Binds between the exit (E) and peptidyl (P) site of the ribosome and promotes rescue of stalled ribosome: specifically required for efficient translation of polyproline-containing peptides as well as other motifs that stall the ribosome. Acts as a ribosome quality control (RQC) cofactor by joining the RQC complex to facilitate peptidyl transfer during CAT tailing step. Involved in actin dynamics and cell cycle progression, mRNA decay and probably in a pathway involved in stress response and maintenance of cell wall integrity. In Saccharomyces cerevisiae (strain ATCC 204508 / S288c) (Baker's yeast), this protein is Eukaryotic translation initiation factor 5A-1 (HYP2).